The chain runs to 439 residues: Chitinase-like protein Idgf1 (439 aa).

An N-terminal signal peptide occupies residues Met-1–Ala-20. A GH18 domain is found at Ser-22–Gly-439. The cysteines at positions 26 and 53 are disulfide-linked. Residues Asn-122, Asn-218, and Asn-346 are each glycosylated (N-linked (GlcNAc...) asparagine). Cys-340 and Cys-423 are disulfide-bonded.

The protein belongs to the glycosyl hydrolase 18 family. IDGF subfamily. As to expression, primarily expressed in yolk cells and fat body. In larvae, it is expressed in large salivary gland cells and weakly expressed in imaginal disks. Less expressed than Idgf2 and Idgf4.

It is found in the secreted. In terms of biological role, cooperates with insulin-like peptides to stimulate the proliferation, polarization and motility of imaginal disk cells. May act by stabilizing the binding of insulin-like peptides to its receptor through a simultaneous interaction with both molecules to form a multiprotein signaling complex. The chain is Chitinase-like protein Idgf1 (Idgf1) from Drosophila melanogaster (Fruit fly).